We begin with the raw amino-acid sequence, 139 residues long: Prostate-associated microseminoprotein (139 aa).

The signal sequence occupies residues 1–35 (MALRMLWAGQAKGILGGWRTICLVVSLFLQHPGVS). Intrachain disulfides connect Cys-38–Cys-78, Cys-46–Cys-69, Cys-64–Cys-100, Cys-67–Cys-77, and Cys-91–Cys-114. A disordered region spans residues 116–139 (GGGPDLEWGSANTPAPGASAPHSS).

Belongs to the beta-microseminoprotein family.

Its subcellular location is the secreted. Its function is as follows. Acts as a ligand for C-C chemokine receptor CCR2. Signals through binding and activation of CCR2 and induces a strong chemotactic response and mobilization of intracellular calcium ions. Exhibits a chemotactic activity for monocytes and lymphocytes but not neutrophils. This is Prostate-associated microseminoprotein (Msmp) from Mus musculus (Mouse).